We begin with the raw amino-acid sequence, 249 residues long: AA9 family lytic polysaccharide monooxygenase cel61B (249 aa).

The signal sequence occupies residues 1–19; sequence MKSCAILAALGCLAGSVLG. A Cu(2+)-binding site is contributed by His20. An N-linked (GlcNAc...) asparagine glycan is attached at Asn25. Intrachain disulfides connect Cys78–Cys198 and Cys120–Cys124. Cu(2+) is bound at residue His108. Positions 184 and 193 each coordinate O2. Tyr195 provides a ligand contact to Cu(2+).

It belongs to the polysaccharide monooxygenase AA9 family. In terms of assembly, monomer. The cofactor is Cu(2+).

The protein resides in the secreted. The enzyme catalyses [(1-&gt;4)-beta-D-glucosyl]n+m + reduced acceptor + O2 = 4-dehydro-beta-D-glucosyl-[(1-&gt;4)-beta-D-glucosyl]n-1 + [(1-&gt;4)-beta-D-glucosyl]m + acceptor + H2O.. In terms of biological role, lytic polysaccharide monooxygenase (LPMO) that depolymerizes crystalline and amorphous polysaccharides via the oxidation of scissile alpha- or beta-(1-4)-glycosidic bonds, yielding C1 or C4 oxidation products. Catalysis by LPMOs requires the reduction of the active-site copper from Cu(II) to Cu(I) by a reducing agent and H(2)O(2) or O(2) as a cosubstrate. This is AA9 family lytic polysaccharide monooxygenase cel61B from Hypocrea jecorina (strain QM6a) (Trichoderma reesei).